Consider the following 91-residue polypeptide: Conotoxin Im9.1 (91 aa).

A signal peptide spans 1–23 (MSKVGVVPLIFLVLLSIAALQNG). Residues 24–55 (DDPRRQRDEKQSPQGDILRSTLTKYSYNIQRR) constitute a propeptide that is removed on maturation. 3 disulfides stabilise this stretch: C56/C72, C63/C83, and C66/C86.

This sequence belongs to the conotoxin M superfamily. Expressed by the venom duct.

It localises to the secreted. Its function is as follows. Probable neurotoxin. This Conus imperialis (Imperial cone) protein is Conotoxin Im9.1.